Here is an 802-residue protein sequence, read N- to C-terminus: Phenylalanine--tRNA ligase beta subunit (802 aa).

A tRNA-binding domain is found at 40–155 (SASLKNVVVG…AHVETGVNAI (116 aa)). Residues 409–484 (KAVNKIETSL…RIYGYDEIPV (76 aa)) form the B5 domain. 4 residues coordinate Mg(2+): aspartate 462, aspartate 468, glutamate 471, and glutamate 472. Residues 709 to 802 (PRYPEMTRDL…LQEKLNAIIR (94 aa)) form the FDX-ACB domain.

This sequence belongs to the phenylalanyl-tRNA synthetase beta subunit family. Type 1 subfamily. Tetramer of two alpha and two beta subunits. It depends on Mg(2+) as a cofactor.

It is found in the cytoplasm. It carries out the reaction tRNA(Phe) + L-phenylalanine + ATP = L-phenylalanyl-tRNA(Phe) + AMP + diphosphate + H(+). This Listeria monocytogenes serovar 1/2a (strain ATCC BAA-679 / EGD-e) protein is Phenylalanine--tRNA ligase beta subunit.